The sequence spans 514 residues: MVEEVQKHSVHTLVFRSLKRTHDMFVADNGKPVPLDEESHKRKMAIKLRNEYGPVLHMPTSKENLKEKGPQNATDSYVHKQYPANQGQEVEYFVAGTHPYPPGPGVALTADTKIQRMPSESAAQSLAVALPLQTKADANRTAPSGSEYRHPGASDRPQPTAMNSIVMETGNTKNSALMAKKAPTMPKPQWHPPWKLYRVISGHLGWVRCIAVEPGNQWFVTGSADRTIKIWDLASGKLKLSLTGHISTVRGVIVSTRSPYLFSCGEDKQVKCWDLEYNKVIRHYHGHLSAVYGLDLHPTIDVLVTCSRDSTARIWDVRTKASVHTLSGHTNAVATVRCQAAEPQIITGSHDTTIRLWDLVAGKTRVTLTNHKKSVRAVVLHPRHYTFASGSPDNIKQWKFPDGSFIQNLSGHNAIINTLTVNSDGVLVSGADNGTMHLWDWRTGYNFQRVHAAVQPGSLDSESGIFACAFDQSESRLLTAEADKTIKVYREDDTATEETHPVSWKPEIIKRKRF.

N-acetylmethionine is present on methionine 1. Serine 119 carries the phosphoserine modification. A disordered region spans residues 135–160 (KADANRTAPSGSEYRHPGASDRPQPT). At serine 201 the chain carries Phosphoserine. 7 WD repeats span residues 202 to 241 (GHLG…LKLS), 244 to 283 (GHIS…VIRH), 286 to 325 (GHLS…SVHT), 328 to 367 (GHTN…TRVT), 370 to 410 (NHKK…QNLS), 411 to 449 (GHNA…NFQR), and 460 to 499 (DSES…TEET). Phosphoserine is present on serine 391.

This sequence belongs to the WD repeat PRL1/PRL2 family. Identified in the spliceosome C complex. Component of the PRP19-CDC5L splicing complex composed of a core complex comprising a homotetramer of PRPF19, CDC5L, PLRG1 and BCAS2, and at least three less stably associated proteins CTNNBL1, CWC15 and HSPA8. Interacts (via its WD40 repeat domain) directly with CDC5L (via its C-terminal); the interaction is required for mRNA splicing but not for spliceosome assembly. Component of the minor spliceosome, which splices U12-type introns. Within this complex, interacts with CRIPT. Also interacts directly in the complex with BCAS2 and PRPF19. Interacts with USB1.

The protein resides in the nucleus. It localises to the nucleus speckle. In terms of biological role, involved in pre-mRNA splicing as component of the spliceosome. Component of the PRP19-CDC5L complex that forms an integral part of the spliceosome and is required for activating pre-mRNA splicing. As a component of the minor spliceosome, involved in the splicing of U12-type introns in pre-mRNAs. The chain is Pleiotropic regulator 1 (PLRG1) from Homo sapiens (Human).